Here is a 1129-residue protein sequence, read N- to C-terminus: Egg-laying defective protein 27 (1129 aa).

The segment covering 1–11 (MSRFDSQCSSE) has biased composition (polar residues). The tract at residues 1 to 43 (MSRFDSQCSSEDVNKEDECVPSSSEDSQDGVSSPMENDDEPEF) is disordered. The span at 22–33 (SSSEDSQDGVSS) shows a compositional bias: low complexity. Residues 87-223 (TLYRLRDSVF…QDSTKLASTH (137 aa)) form the BAH domain. The ELM2 domain maps to 224–327 (YAIRVGTSFQ…DALSELNAND (104 aa)). Residues 332 to 384 (TDVDNMTQDDAKKFAKGIKQLGKNFSRIHRELLPHHSREQLVSYYYLWKKTPE) form the SANT domain. Positions 388–434 (PKQAARRVNPTSIKRPTKEKVKASRPTSTEYLDFDSASESDVENNGP) are disordered. Residues 419–429 (LDFDSASESDV) are compositionally biased toward acidic residues. The segment at 439-485 (CHHCYGAESKDWHHANGLLLCTDCRLHYKKYGQLRQIANRPSQVPAC) adopts a GATA-type; atypical zinc-finger fold. Disordered regions lie at residues 488–636 (KRSN…DPMP), 693–717 (RDET…SPED), 790–814 (QQNQ…QQAQ), 899–950 (MIAE…HAAA), and 982–1040 (MAAQ…REHA). Composition is skewed to polar residues over residues 525–545 (PSTV…TKKL) and 561–573 (VINN…SSEE). Acidic residues-rich tracts occupy residues 613 to 634 (SYDD…DDDP) and 705 to 717 (KDDE…SPED). Over residues 899–914 (MIAEQQQQQRHAAAQQ) the composition is skewed to low complexity. Residues 915–932 (LREREQREQRERERERQH) are compositionally biased toward basic and acidic residues. 2 stretches are compositionally biased toward low complexity: residues 933 to 950 (QQQA…HAAA) and 983 to 999 (AAQQ…AQAQ). Basic and acidic residues predominate over residues 1000–1040 (RDQERERREREAREREAAREREREQAAREAAARDQAAREHA).

Interacts with ceh-6, sem-4 and sox-2. Interacts with wdr-5.1. In terms of tissue distribution, expression detected in anterior intestine and head region.

Its subcellular location is the nucleus. Its function is as follows. Transcription factor which promotes stress survival and delays aging. Required for cell cycle progression and development of the mesodermal and endodermal embryonic lineages. Required for normal T-cell polarity, for correct migration of QL neuroblast descendants and other cells, for embryonic patterning and for the embryonic expression of hlh-8. Also required for the transdifferentiation of the Y rectal epithelial cell to the PDA motor neuron during larval development. In Caenorhabditis elegans, this protein is Egg-laying defective protein 27.